The primary structure comprises 649 residues: Threonine--tRNA ligase (649 aa).

Residues 1-61 (MIKITFPDGA…TQDGSIEIVT (61 aa)) enclose the TGS domain. Positions 242-540 (DHRKLGKELD…LIETYKGAFP (299 aa)) are catalytic. The Zn(2+) site is built by Cys-336, His-387, and His-517.

It belongs to the class-II aminoacyl-tRNA synthetase family. Homodimer. The cofactor is Zn(2+).

Its subcellular location is the cytoplasm. The catalysed reaction is tRNA(Thr) + L-threonine + ATP = L-threonyl-tRNA(Thr) + AMP + diphosphate + H(+). Its function is as follows. Catalyzes the attachment of threonine to tRNA(Thr) in a two-step reaction: L-threonine is first activated by ATP to form Thr-AMP and then transferred to the acceptor end of tRNA(Thr). Also edits incorrectly charged L-seryl-tRNA(Thr). This Streptococcus mutans serotype c (strain ATCC 700610 / UA159) protein is Threonine--tRNA ligase.